We begin with the raw amino-acid sequence, 197 residues long: Imidazoleglycerol-phosphate dehydratase (197 aa).

It belongs to the imidazoleglycerol-phosphate dehydratase family.

It localises to the cytoplasm. It carries out the reaction D-erythro-1-(imidazol-4-yl)glycerol 3-phosphate = 3-(imidazol-4-yl)-2-oxopropyl phosphate + H2O. It functions in the pathway amino-acid biosynthesis; L-histidine biosynthesis; L-histidine from 5-phospho-alpha-D-ribose 1-diphosphate: step 6/9. In Pseudomonas putida (strain GB-1), this protein is Imidazoleglycerol-phosphate dehydratase.